Here is a 619-residue protein sequence, read N- to C-terminus: Eukaryotic translation initiation factor 3 subunit D (619 aa).

The segment at 99–160 (QKQPHQRGRF…KWGARPPPKI (62 aa)) is disordered. The span at 100 to 121 (KQPHQRGRFRGNLRNQRGRGRG) shows a compositional bias: basic residues. An RNA gate region spans residues 288 to 302 (EFDLLTVNETAIEPP). The interval 588–619 (TPAATETVATATTEATTPTTATKTTAPAAAQK) is disordered.

This sequence belongs to the eIF-3 subunit D family. As to quaternary structure, component of the eukaryotic translation initiation factor 3 (eIF-3) complex.

It is found in the cytoplasm. Its function is as follows. mRNA cap-binding component of the eukaryotic translation initiation factor 3 (eIF-3) complex, which is involved in protein synthesis of a specialized repertoire of mRNAs and, together with other initiation factors, stimulates binding of mRNA and methionyl-tRNAi to the 40S ribosome. The eIF-3 complex specifically targets and initiates translation of a subset of mRNAs involved in cell proliferation. In the eIF-3 complex, eif3d specifically recognizes and binds the 7-methylguanosine cap of a subset of mRNAs. The sequence is that of Eukaryotic translation initiation factor 3 subunit D from Aedes aegypti (Yellowfever mosquito).